Here is a 327-residue protein sequence, read N- to C-terminus: Dolichyl-phosphate beta-glucosyltransferase ALG5D (327 aa).

Topologically, residues 1-6 (MEKQLA) are lumenal. A helical membrane pass occupies residues 7 to 27 (ELSVYILIIFLILGFIMAILM). The Cytoplasmic segment spans residues 28-327 (RFGDDTTLFD…NIWTIRDRKF (300 aa)).

It belongs to the glycosyltransferase 2 family.

It is found in the endoplasmic reticulum membrane. The catalysed reaction is a di-trans,poly-cis-dolichyl phosphate + UDP-alpha-D-glucose = a di-trans,poly-cis-dolichyl beta-D-glucosyl phosphate + UDP. It functions in the pathway protein modification; protein glycosylation. In terms of biological role, dolichyl-phosphate beta-glucosyltransferase involved in the glycosylation of glycoproteins through the synthesis of dolichyl beta-D-glucosyl phosphate which serves as a sugar donor for transfer of three glucose residues to the Man-9-GlcNAc-2-PP-dolichol precursor to N-glycans. The chain is Dolichyl-phosphate beta-glucosyltransferase ALG5D from Trichomonas vaginalis (strain ATCC PRA-98 / G3).